Reading from the N-terminus, the 598-residue chain is Transcription factor dpl-1 (598 aa).

3 disordered regions span residues 1 to 73, 435 to 457, and 573 to 598; these read MNPT…PTGL, NRPY…VNSG, and TEQP…DYFQ. A compositionally biased stretch (polar residues) spans 13 to 22; it reads PAQSRPQVSL. A compositionally biased stretch (gly residues) spans 55-64; that stretch reads GVGGSSGAGG.

It belongs to the E2F/DP family. Component of the DRM complex, at least composed of lin-9, lin-35, lin-37, lin-52, lin-53, lin-54- dpl-1 and efl-1. Interacts (via N-terminus) with efl-1. Interacts (via C-terminus) with lin-35 (via C-terminus).

The protein localises to the nucleus. In terms of biological role, synthetic multivulva class B (synMuvB) protein. SynMuvB proteins are required to repress the induction of vulval development by Ras signaling and probably act by forming the multiprotein DRM complex that represses transcription. May also negatively regulate vulval development in association with other SynMuv class B proteins such as lin-15A. Can stimulate E2F-dependent transcription. Plays a role in negatively regulating the progression through the G1 phase of the cell cycle during postembryonic development, most likely by acting as a transcriptional repressor in association with the cell cycle regulatory factor efl-1 and the transcriptional repressor lin-35, but may also act as a positive regulator of cell cycle entry. Involved in the regulation of intestinal cell division during postembryonic development, most likely in complex with efl-1 and lin-35. Promotes germ cell programmed cell death, probably together with efl-1, by positively regulating the expression of the apoptosis proteins ced-3 and ced-4. In particular, positively regulates the expression of ced-4 in response to starvation. Its role in programmed cell death may be in conjunction with cell cycle regulatory factor efl-1 and the synthetic multivulva class B proteins lin-35, lin-37 and lin-52, and is independent of the ced-1, ced-8 and ced-9 pathways. The protein is Transcription factor dpl-1 of Caenorhabditis elegans.